A 434-amino-acid polypeptide reads, in one-letter code: MKTQYSLIRKIWAHSVTEFLKSQWFFICLAILIVIARFAPNFARDGGLIKGQYSIGYGCVAWIFLQSGLGMKSRSLMANMLNWRAHATILVLSFLITSSIVYGFCCAVKAANDPKIDDWVLIGLILTATCPTTVASNVIMTTNAGGNSLLCVCEVFIGNLLGAFITPALVQMFTNRAPFAYGNPATGNGIGALYGRVMKQVGLSVFVPLFVGQVIQNCFPKGTAYYLGFLKKYHIKIGSYMLLLIMFSSFSTAFYQDAFTSVSHVCIIFLCFFNLGIYIFFTGLSYLCARPWFILKLFPHEPIEGKSTRLYRYSYNIFRPFYYSKEDAICIMFCGPAKTAALGVSLITSQYGDKKEHLGKLLVPLVLYQVEQVMTANFFVSLFKRWIQKDAQADGSESSCANENEEVDLEKIISIGTGENQSVLSNNVPYTQPR.

Residues 1 to 15 lie on the Cytoplasmic side of the membrane; that stretch reads MKTQYSLIRKIWAHS. A helical membrane pass occupies residues 16-36; it reads VTEFLKSQWFFICLAILIVIA. Topologically, residues 37–50 are extracellular; sequence RFAPNFARDGGLIK. A helical transmembrane segment spans residues 51-71; the sequence is GQYSIGYGCVAWIFLQSGLGM. Residues 72-87 lie on the Cytoplasmic side of the membrane; that stretch reads KSRSLMANMLNWRAHA. The helical transmembrane segment at 88-108 threads the bilayer; that stretch reads TILVLSFLITSSIVYGFCCAV. Residues 109-118 are Extracellular-facing; it reads KAANDPKIDD. The chain crosses the membrane as a helical span at residues 119-139; it reads WVLIGLILTATCPTTVASNVI. The Cytoplasmic segment spans residues 140–149; the sequence is MTTNAGGNSL. A helical membrane pass occupies residues 150–170; sequence LCVCEVFIGNLLGAFITPALV. Residues 171–199 lie on the Extracellular side of the membrane; it reads QMFTNRAPFAYGNPATGNGIGALYGRVMK. A helical membrane pass occupies residues 200–220; it reads QVGLSVFVPLFVGQVIQNCFP. Topologically, residues 221-234 are cytoplasmic; sequence KGTAYYLGFLKKYH. The helical transmembrane segment at 235 to 255 threads the bilayer; that stretch reads IKIGSYMLLLIMFSSFSTAFY. The Extracellular segment spans residues 256-264; sequence QDAFTSVSH. A helical membrane pass occupies residues 265-285; that stretch reads VCIIFLCFFNLGIYIFFTGLS. The Cytoplasmic segment spans residues 286 to 327; it reads YLCARPWFILKLFPHEPIEGKSTRLYRYSYNIFRPFYYSKED. A helical membrane pass occupies residues 328-348; that stretch reads AICIMFCGPAKTAALGVSLIT. Residues 349–362 are Extracellular-facing; it reads SQYGDKKEHLGKLL. The chain crosses the membrane as a helical span at residues 363-383; sequence VPLVLYQVEQVMTANFFVSLF. Over 384 to 434 the chain is Cytoplasmic; it reads KRWIQKDAQADGSESSCANENEEVDLEKIISIGTGENQSVLSNNVPYTQPR. Ser425 bears the Phosphoserine mark.

It belongs to the bile acid:sodium symporter (BASS) (TC 2.A.28) family.

It localises to the cell membrane. It is found in the bud neck. Functionally, solute carrier protein that negatively regulates the cytosolic calcium homeostasis in response to high levels of extracellular calcium. In Saccharomyces cerevisiae (strain ATCC 204508 / S288c) (Baker's yeast), this protein is Solute carrier RCH1.